The following is a 427-amino-acid chain: Serine--tRNA ligase (427 aa).

An L-serine-binding site is contributed by 231-233; that stretch reads TAE. 262 to 264 lines the ATP pocket; sequence RSE. Glutamate 285 is a binding site for L-serine. 349-352 contributes to the ATP binding site; the sequence is EISS. Residue serine 385 coordinates L-serine.

This sequence belongs to the class-II aminoacyl-tRNA synthetase family. Type-1 seryl-tRNA synthetase subfamily. In terms of assembly, homodimer. The tRNA molecule binds across the dimer.

It localises to the cytoplasm. The catalysed reaction is tRNA(Ser) + L-serine + ATP = L-seryl-tRNA(Ser) + AMP + diphosphate + H(+). It catalyses the reaction tRNA(Sec) + L-serine + ATP = L-seryl-tRNA(Sec) + AMP + diphosphate + H(+). Its pathway is aminoacyl-tRNA biosynthesis; selenocysteinyl-tRNA(Sec) biosynthesis; L-seryl-tRNA(Sec) from L-serine and tRNA(Sec): step 1/1. Catalyzes the attachment of serine to tRNA(Ser). Is also able to aminoacylate tRNA(Sec) with serine, to form the misacylated tRNA L-seryl-tRNA(Sec), which will be further converted into selenocysteinyl-tRNA(Sec). This Listeria innocua serovar 6a (strain ATCC BAA-680 / CLIP 11262) protein is Serine--tRNA ligase.